The primary structure comprises 297 residues: MKSLLAIYPGSIVSEELCIREGCLCFFDESNQRYISIPKTEISEKEVLVLQSFLTPADEGNQLSMKSPEENKWFSFLFSRGELPAYIKKRTRFVHFHLFGKIERTSFTEAVRHFWPVSFVIVWIHEDRGVIVEQESEAAAEKDELESLAKVLESDFYFSVRFYAGRFYEPDECLRKHYAREQAYFLFAEKRLPQVQSVTFEMIFPFLLLETEKEKLETLLSEEAELLFGSESELRKTIKLFIENNSNVTLTAKKLHLHRNSLQYRIDKFIERSGIDIKSYKGALLAYFICLQNESSE.

The stretch at 128–156 (RGVIVEQESEAAAEKDELESLAKVLESDF) forms a coiled coil.

This is an uncharacterized protein from Bacillus subtilis (strain 168).